A 71-amino-acid polypeptide reads, in one-letter code: Exodeoxyribonuclease 7 small subunit (71 aa).

Belongs to the XseB family. In terms of assembly, heterooligomer composed of large and small subunits.

The protein localises to the cytoplasm. It catalyses the reaction Exonucleolytic cleavage in either 5'- to 3'- or 3'- to 5'-direction to yield nucleoside 5'-phosphates.. In terms of biological role, bidirectionally degrades single-stranded DNA into large acid-insoluble oligonucleotides, which are then degraded further into small acid-soluble oligonucleotides. The sequence is that of Exodeoxyribonuclease 7 small subunit from Streptococcus agalactiae serotype Ia (strain ATCC 27591 / A909 / CDC SS700).